The primary structure comprises 378 residues: Non-functional pseudokinase ZRK6 (378 aa).

The 345-residue stretch at 34–378 (DGKCNPIKNF…SNNRSQMSSI (345 aa)) folds into the Protein kinase domain. Residues 40–48 (IKNFSYDQI) and lysine 83 contribute to the ATP site.

This sequence belongs to the protein kinase superfamily. Ser/Thr protein kinase family. ZRK subfamily. As to quaternary structure, interacts with RPP13L4/ZAR1.

The polypeptide is Non-functional pseudokinase ZRK6 (Arabidopsis thaliana (Mouse-ear cress)).